The sequence spans 275 residues: 4-diphosphocytidyl-2-C-methyl-D-erythritol kinase (275 aa).

Lys-14 is an active-site residue. Position 98 to 108 (98 to 108) interacts with ATP; sequence PMGAGLGGGSS. Asp-140 is a catalytic residue.

Belongs to the GHMP kinase family. IspE subfamily.

It catalyses the reaction 4-CDP-2-C-methyl-D-erythritol + ATP = 4-CDP-2-C-methyl-D-erythritol 2-phosphate + ADP + H(+). It functions in the pathway isoprenoid biosynthesis; isopentenyl diphosphate biosynthesis via DXP pathway; isopentenyl diphosphate from 1-deoxy-D-xylulose 5-phosphate: step 3/6. Its function is as follows. Catalyzes the phosphorylation of the position 2 hydroxy group of 4-diphosphocytidyl-2C-methyl-D-erythritol. The sequence is that of 4-diphosphocytidyl-2-C-methyl-D-erythritol kinase from Francisella philomiragia subsp. philomiragia (strain ATCC 25017 / CCUG 19701 / FSC 153 / O#319-036).